Here is a 362-residue protein sequence, read N- to C-terminus: Alternative oxidase, mitochondrial (362 aa).

Residues 1 to 64 (MNTPKVNILY…RGFTTTSVVR (64 aa)) constitute a mitochondrion transit peptide. Residues 156-176 (LVRFIFLESIAGVPGMVAGML) traverse the membrane as a helical segment. Positions 163, 202, and 205 each coordinate Fe cation. The helical transmembrane segment at 222–242 (LILGAQGVFFNAMFLSYLVSP) threads the bilayer. The Fe cation site is built by E253, E310, and H313.

This sequence belongs to the alternative oxidase family. Requires Fe cation as cofactor.

The protein localises to the mitochondrion inner membrane. Its function is as follows. Catalyzes cyanide-resistant oxygen consumption. May increase respiration when the cytochrome respiratory pathway is restricted, or in response to low temperatures. The protein is Alternative oxidase, mitochondrial (aod-1) of Gelasinospora sp. (strain S23).